The primary structure comprises 240 residues: MSPVANAFDIKSASLDLLALLLRTDNLDELSQALDARFGDTSDAPAEAFVLDVEALPNPTELDLGRLLPLLSRRGIRAVALRHPDNALAAVASRYGLAFANSAAQPRSAQAAAEPAPKAAVESAAAPASAPTMIIDRPVRAGQQIYAKGGDLVVLAMVSAGAEVIADGNIHVYAPLRGRALAGARGNHAARIFARSMEAELVSIAGVYRTIEQALPDSILGKPTQIYLENERLVMTALGE.

Belongs to the MinC family. In terms of assembly, interacts with MinD and FtsZ.

Its function is as follows. Cell division inhibitor that blocks the formation of polar Z ring septums. Rapidly oscillates between the poles of the cell to destabilize FtsZ filaments that have formed before they mature into polar Z rings. Prevents FtsZ polymerization. The chain is Probable septum site-determining protein MinC from Chromobacterium violaceum (strain ATCC 12472 / DSM 30191 / JCM 1249 / CCUG 213 / NBRC 12614 / NCIMB 9131 / NCTC 9757 / MK).